Reading from the N-terminus, the 359-residue chain is MELIPDLPETVAYECLLRSSYKQFPLMASVCKLWQREISLSDFFRHRKASGHSQELVVLSQARVDPVKELVSGNKTIPTPVYRISVLELGTGLRSELPPVPGHSNGLPLFCRLVSVGSDLVVLCGLDPVTWRTSDSVFVFSFLTSTWRVGKSMPGGPRSFFACASDSQRNVFVAGGHDEDKNAMMSALVYDVAEDRWAFLPDMGRERDECTAIFHAGKFHVIGGYSTEEQGQFSKTAESFDVTTWRWSPQGEEFLSSEMTMWPPICAAGENGDLYACCRRDLMMMKDDTWYKVGNLPADVCNVSYVAIRRSGNLVVIGSARYGEPSVGYNWDMSNSRWLKLETHDKYEGHVQAGCFLEI.

Residues 2 to 49 (ELIPDLPETVAYECLLRSSYKQFPLMASVCKLWQREISLSDFFRHRKA) enclose the F-box domain. Kelch repeat units lie at residues 119–167 (DLVV…ASDS), 170–217 (NVFV…FHAG), 219–269 (FHVI…CAAG), 271–310 (NGDL…AIRR), and 313–358 (NLVV…CFLE).

This Arabidopsis thaliana (Mouse-ear cress) protein is F-box/kelch-repeat protein At1g15670.